The sequence spans 648 residues: RAF proto-oncogene serine/threonine-protein kinase (648 aa).

A Phosphoserine; by MAPK1 modification is found at Ser29. The residue at position 43 (Ser43) is a Phosphoserine; by PKA and MAPK1. The RBD domain occupies 56-131 (NTIRVFLPNK…IGEELQVDFL (76 aa)). The Phorbol-ester/DAG-type zinc-finger motif lies at 138–184 (THNFARKTFLKLAFCDICQKFLLNGFRCQTCGYKFHEHCSTKVPTMC). Zn(2+) contacts are provided by His139, Cys152, Cys155, Cys165, Cys168, His173, Cys176, and Cys184. The disordered stretch occupies residues 205 to 265 (GVPAPPSFPM…RSTSTPNVHM (61 aa)). Ser233 carries the post-translational modification Phosphoserine; by PKA. Residues 239 to 265 (TFNTSSPSSEGSLSQRQRSTSTPNVHM) show a composition bias toward polar residues. The residue at position 252 (Ser252) is a Phosphoserine. A Phosphoserine; by PKA, PKC and PKB/AKT1 modification is found at Ser259. Thr268 bears the Phosphothreonine; by autocatalysis mark. At Thr269 the chain carries Phosphothreonine; by PKA. The interval 281–335 (IRSHSESASPSALSSSPNNLSPTGWSQPKTPVPAQRERAPGSGTQEKNKIRPRGQ) is disordered. The span at 286–301 (ESASPSALSSSPNNLS) shows a compositional bias: low complexity. A phosphoserine; by MAPK1 mark is found at Ser289, Ser296, and Ser301. An interaction with PEBP1/RKIP region spans residues 331–349 (RPRGQRDSSYYWEIEASEV). The residue at position 338 (Ser338) is a Phosphoserine; by PAK1, PAK2, PAK3 and PAK5. Residue Ser339 is modified to Phosphoserine; by PAK1, PAK2 and PAK3. A phosphotyrosine; by SRC mark is found at Tyr340 and Tyr341. Positions 349–609 (VMLSTRIGSG…PQILSSIELL (261 aa)) constitute a Protein kinase domain. ATP-binding positions include 355–363 (IGSGSFGTV) and Lys375. Asp468 acts as the Proton acceptor in catalysis. Residue Ser471 is modified to Phosphoserine. Residue Thr491 is modified to Phosphothreonine. The residue at position 494 (Ser494) is a Phosphoserine. Phosphoserine; by PKC occurs at positions 497 and 499. The residue at position 563 (Arg563) is a Symmetric dimethylarginine; by PRMT5. Ser621 is subject to Phosphoserine. Ser642 is modified (phosphoserine; by MAPK1).

It belongs to the protein kinase superfamily. TKL Ser/Thr protein kinase family. RAF subfamily. In terms of assembly, monomer. Homodimer. Heterodimerizes with BRAF and this heterodimer possesses a highly increased kinase activity compared to the respective homodimers or monomers. Heterodimerization is mitogen-regulated and enhanced by 14-3-3 proteins. MAPK1/ERK2 activation can induce a negative feedback that promotes the dissociation of the heterodimer. Forms a multiprotein complex with Ras (M-Ras/MRAS), SHOC2 and protein phosphatase 1 (PPP1CA, PPP1CB and PPP1CC). Interacts with LZTR1. Interacts with Ras proteins; the interaction is antagonized by RIN1. Weakly interacts with RIT1. Interacts (via N-terminus) with RGS14 (via RBD domains); the interaction mediates the formation of a ternary complex with BRAF, a ternary complex inhibited by GNAI1. Probably forms a complex composed of chaperones HSP90 and HSP70, co-chaperones CDC37, PPP5C, TSC1 and client protein TSC2, CDK4, AKT, RAF1 and NR3C1; this complex does not contain co-chaperones STIP1/HOP and PTGES3/p23. Interacts with STK3/MST2; the interaction inhibits its pro-apoptotic activity. Interacts (when phosphorylated at Ser-259) with YWHAZ (unphosphorylated at 'Thr-232'). Interacts with MAP2K1/MEK1 and MAP2K2/MEK2. Interacts with MAP3K5/ASF1 (via N-terminus) and this interaction inhibits the proapoptotic function of MAP3K5/ASK1. Interacts with PAK1 (via kinase domain). The Ser-338 and Ser-339 phosphorylated form (by PAK1) interacts with BCL2. Interacts with PEBP1/RKIP and this interaction is enhanced if RAF1 is phosphorylated on residues Ser-338, Ser-339, Tyr-340 and Tyr-341. Interacts with ADCY2, ADCY5, ADCY6, DGKH, RCAN1/DSCR1, PPP1R12A, PKB/AKT1, SPRY2, SPRY4, CNKSR1/CNK1, KSR2 and PHB/prohibitin. The phosphorylated form interacts with PIN1. Interacts with PPP2CA, PPP2R1B and ROCK2. In its active form, interacts with PRMT5. Interacts with FAM83B; displaces 14-3-3 proteins from RAF1 and activates RAF1. Interacts with PDE8A; the interaction promotes RAF1 activity. Interacts with MFHAS1. Interacts with GLS. Interacts with NEK10 and MAP2K1; the interaction is direct with NEK10 and required for ERK1/2-signaling pathway activation in response to UV irradiation. The cofactor is Zn(2+). In terms of processing, phosphorylation at Thr-269, Ser-338, Tyr-341, Thr-491 and Ser-494 results in its activation. Phosphorylation at Ser-29, Ser-43, Ser-289, Ser-296, Ser-301 and Ser-642 by MAPK1/ERK2 results in its inactivation. Phosphorylation at Ser-259 induces the interaction with YWHAZ and inactivates kinase activity. Dephosphorylation of Ser-259 by the SHOC2-MRAS-PP1c (SMP) complex consisting of SHOC2, GTP-bound M-Ras/MRAS and the catalytic subunit of protein phosphatase 1 (PPP1CA, PPP1CB or PPP1CC); this relieves inactivation and stimulates kinase activity. Phosphorylation at Ser-338 by PAK1 and PAK5 and Ser-339 by PAK1 is required for its mitochondrial localization. Phosphorylation at Ser-621 in response to growth factor treatment stabilizes the protein, possibly by preventing proteasomal degradation. Phosphorylation at Ser-289, Ser-296, Ser-301, Ser-338 and Ser-621 are somehow linked to the methylation potential of cells. Treatment of cells with HGF in the presence of the methylation inhibitor 5'-methylthioadenosine (MTA) results in increased phosphorylation at Ser-338 and Ser-621 and decreased phosphorylation at Ser-296, Ser-301 and Ser-338. Dephosphorylation at Ser-338 by PPP5C results in a decreased of activity. Post-translationally, methylated at Arg-563 in response to EGF treatment. This modification leads to destabilization of the protein, possibly through proteasomal degradation. As to expression, present in all tissues tested: testis, ovary, small intestine, colon, peripheral blood leukocytes, fetal liver, bone marrow, thymus, lymph node and spleen, and the cell lines melanoma G-361, lung carcinoma A-549, colorectal adenocarcinoma SW480, Burkitt's lymphoma Raji and lymphoblastic leukemia MOLT-4. In skeletal muscle, isoform 1 is more abundant than isoform 2.

Its subcellular location is the cytoplasm. The protein localises to the cell membrane. It is found in the mitochondrion. It localises to the nucleus. The enzyme catalyses L-seryl-[protein] + ATP = O-phospho-L-seryl-[protein] + ADP + H(+). The catalysed reaction is L-threonyl-[protein] + ATP = O-phospho-L-threonyl-[protein] + ADP + H(+). Its activity is regulated as follows. Regulation is a highly complex process involving membrane recruitment, protein-protein interactions, dimerization, and phosphorylation/dephosphorylation events. Ras-GTP recruits RAF1 to the membrane, thereby promoting its activation. The inactive conformation of RAF1 is maintained by autoinhibitory interactions occurring between the N-terminal regulatory and the C-terminal catalytic domains and by the binding of a 14-3-3 protein that contacts two phosphorylation sites, Ser-259 and Ser-621. Upon mitogenic stimulation, Ras and PPP2R1A cooperate to release autoinhibition and the subsequent phosphorylation of activating sites: Ser-338, Tyr-341, Thr-491, and Ser-494, yields a fully active kinase. Through a negative feedback mechanism involving MAPK1/ERK2, RAF1 is phosphorylated on Ser-29, Ser-43, Ser-289, Ser-296, Ser-301 and Ser-642 by MAPK1/ERK2, which yields an inactive, desensitized kinase. The signaling-competent conformation of RAF1 is finally re-established by the coordinated action of PIN1, a prolyl isomerase that converts pSer and pThr residues from the cis to the trans conformation, which is preferentially recognized and dephosphorylated by PPP2R1A. Activated by homodimerization and heterodimerization (with BRAF). Also regulated through association with other proteins such as KSR2, CNKSR1/CNK1, PEBP1/RKIP, PHB/prohibitin and SPRY4. PEBP1/RKIP acts by dissociating RAF1 from its substrates MAP2K1/MEK1 and MAP2K2/MEK2. PHB/prohibitin facilitates the displacement of 14-3-3 from RAF1 by activated Ras, thereby promoting cell membrane localization and phosphorylation of RAF1 at the activating Ser-338. SPRY4 inhibits Ras-independent, but not Ras-dependent, activation of RAF1. CNKSR1/CNK1 regulates Src-mediated RAF1 activation. Serine/threonine-protein kinase that acts as a regulatory link between the membrane-associated Ras GTPases and the MAPK/ERK cascade, and this critical regulatory link functions as a switch determining cell fate decisions including proliferation, differentiation, apoptosis, survival and oncogenic transformation. RAF1 activation initiates a mitogen-activated protein kinase (MAPK) cascade that comprises a sequential phosphorylation of the dual-specific MAPK kinases (MAP2K1/MEK1 and MAP2K2/MEK2) and the extracellular signal-regulated kinases (MAPK3/ERK1 and MAPK1/ERK2). The phosphorylated form of RAF1 (on residues Ser-338 and Ser-339, by PAK1) phosphorylates BAD/Bcl2-antagonist of cell death at 'Ser-75'. Phosphorylates adenylyl cyclases: ADCY2, ADCY5 and ADCY6, resulting in their activation. Phosphorylates PPP1R12A resulting in inhibition of the phosphatase activity. Phosphorylates TNNT2/cardiac muscle troponin T. Can promote NF-kB activation and inhibit signal transducers involved in motility (ROCK2), apoptosis (MAP3K5/ASK1 and STK3/MST2), proliferation and angiogenesis (RB1). Can protect cells from apoptosis also by translocating to the mitochondria where it binds BCL2 and displaces BAD/Bcl2-antagonist of cell death. Plays a role in the oncogenic transformation of epithelial cells via repression of the TJ protein, occludin (OCLN) by inducing the up-regulation of a transcriptional repressor SNAI2/SLUG, which induces down-regulation of OCLN. Restricts caspase activation in response to selected stimuli, notably Fas stimulation, pathogen-mediated macrophage apoptosis, and erythroid differentiation. Regulates Rho signaling and migration, and is required for normal wound healing. This chain is RAF proto-oncogene serine/threonine-protein kinase (Raf1), found in Mus musculus (Mouse).